A 432-amino-acid polypeptide reads, in one-letter code: Eukaryotic translation initiation factor 3 subunit M (432 aa).

One can recognise a PCI domain in the interval 184–356; the sequence is EEEEAYQHIL…KVFLIHSVRY (173 aa). 2 stretches are compositionally biased toward basic and acidic residues: residues 392–401 and 423–432; these read AQQEAERKLV and QHRERNDNDD. A disordered region spans residues 392-432; it reads AQQEAERKLVEASTQHNNDRGNQRRGGNRGQQHRERNDNDD.

It belongs to the eIF-3 subunit M family. In terms of assembly, component of the eukaryotic translation initiation factor 3 (eIF-3) complex.

The protein resides in the cytoplasm. Component of the eukaryotic translation initiation factor 3 (eIF-3) complex, which is involved in protein synthesis of a specialized repertoire of mRNAs and, together with other initiation factors, stimulates binding of mRNA and methionyl-tRNAi to the 40S ribosome. The eIF-3 complex specifically targets and initiates translation of a subset of mRNAs involved in cell proliferation. This chain is Eukaryotic translation initiation factor 3 subunit M, found in Pyricularia oryzae (strain 70-15 / ATCC MYA-4617 / FGSC 8958) (Rice blast fungus).